The following is a 454-amino-acid chain: Alkaline extracellular protease (454 aa).

A signal peptide spans 1–15 (MKLATAFTILTAVLA). Residues 16–157 (APLAAPAPAP…EIPASSNAKR (142 aa)) constitute a propeptide that is removed on maturation. The Inhibitor I9 domain occupies 68-146 (FIVVFDSSAT…TVEPDTIVSL (79 aa)). The N-linked (GlcNAc...) asparagine glycan is linked to Asn123. Positions 166-454 (QWGLSRISHK…NAVAYNGVGI (289 aa)) constitute a Peptidase S8 domain. Residues Asp200, His231, and Ser397 each act as charge relay system in the active site.

Belongs to the peptidase S8 family. In terms of processing, the pro-region is removed through cleavage by XPR6 after Lys156-Arg157, which yields mature active XPR2. Post-translationally, the 10 consecutive -X-Ala- or -X-Pro- dipeptides located over 100 amino acids upstream of the N-terminal of mature XPR2 are subject to dipeptidyl aminopeptidase (DPAPase)-processing. DPAPase activity is not necessary for XPR6 cleavage and for secretion of mature active XPR2. N-glycosylated. Glycosylation within the pro-region has no effect on secretion and maturation at 18 degrees Celsius, but is required for secretion at 28 degrees Celsius.

It localises to the secreted. The catalysed reaction is Hydrolysis of proteins with broad specificity for peptide bonds, and a preference for a large uncharged residue in P1. Hydrolyzes peptide amides.. With respect to regulation, the protease activity is completely inhibited by the serine inhibitor PMSF but is not affected by thiol group inhibitors and in the presence of dithiothreitol. In the presence of high concentrations of o-phenanthroline the protease activity is only partially inhibited. The pro-region plays an inhibitory role and may provide a mechanism for preventing premature activation in the secretory pathway. Its function is as follows. Major secreted protein that belongs to the subtilisin family serine proteases. The chain is Alkaline extracellular protease from Yarrowia lipolytica (strain CLIB 122 / E 150) (Yeast).